The primary structure comprises 397 residues: Chorismate synthase (397 aa).

Residues R40 and R46 each coordinate NADP(+). Residues 129–131, 257–258, G302, 317–321, and R343 contribute to the FMN site; these read RSS, QA, and KPISS.

This sequence belongs to the chorismate synthase family. As to quaternary structure, homotetramer. The cofactor is FMNH2.

It carries out the reaction 5-O-(1-carboxyvinyl)-3-phosphoshikimate = chorismate + phosphate. It participates in metabolic intermediate biosynthesis; chorismate biosynthesis; chorismate from D-erythrose 4-phosphate and phosphoenolpyruvate: step 7/7. Catalyzes the anti-1,4-elimination of the C-3 phosphate and the C-6 proR hydrogen from 5-enolpyruvylshikimate-3-phosphate (EPSP) to yield chorismate, which is the branch point compound that serves as the starting substrate for the three terminal pathways of aromatic amino acid biosynthesis. This reaction introduces a second double bond into the aromatic ring system. This Chlorobium phaeobacteroides (strain DSM 266 / SMG 266 / 2430) protein is Chorismate synthase.